Here is a 268-residue protein sequence, read N- to C-terminus: Ribonuclease P protein subunit p30 (268 aa).

An N-acetylalanine modification is found at Ala-2. Residues 247–268 (KPRPSEGDEDCLPASKKAKCEG) form a disordered region. A Phosphoserine modification is found at Ser-251.

This sequence belongs to the eukaryotic/archaeal RNase P protein component 3 family. Component of nuclear RNase P and RNase MRP ribonucleoproteins. RNase P consists of a catalytic RNA moiety and about 10 protein subunits; POP1, POP4, POP5, POP7, RPP14, RPP21, RPP25, RPP30, RPP38 and RPP40. Within the RNase P complex, POP1, POP7 and RPP25 form the 'finger' subcomplex, POP5, RPP14, RPP40 and homodimeric RPP30 form the 'palm' subcomplex, and RPP21, POP4 and RPP38 form the 'wrist' subcomplex. All subunits of the RNase P complex interact with the catalytic RNA. Several subunits of RNase P are also part of the RNase MRP complex. RNase MRP consists of a catalytic RNA moiety and about 8 protein subunits; POP1, POP7, RPP25, RPP30, RPP38, RPP40 and possibly also POP4 and POP5.

Its subcellular location is the nucleus. It is found in the nucleolus. Functionally, component of ribonuclease P, a ribonucleoprotein complex that generates mature tRNA molecules by cleaving their 5'-ends. Also a component of the MRP ribonuclease complex, which cleaves pre-rRNA sequences. This is Ribonuclease P protein subunit p30 (RPP30) from Homo sapiens (Human).